A 327-amino-acid chain; its full sequence is Undecaprenyl-phosphate 4-deoxy-4-formamido-L-arabinose transferase (327 aa).

Residues 1 to 235 lie on the Cytoplasmic side of the membrane; that stretch reads MFDAAPIKKV…TCLTTTPLRL (235 aa). The chain crosses the membrane as a helical span at residues 236–256; that stretch reads LSLLGSVIAIGGFSLSVLLIV. At 257–269 the chain is on the periplasmic side; that stretch reads LRLALGPQWAAEG. The helical transmembrane segment at 270 to 290 threads the bilayer; sequence VFMLFAVLFTFIGAQFIGMGL. The Cytoplasmic portion of the chain corresponds to 291 to 327; it reads LGEYIGRIYNDVRARPRYFVQQVIYPESTPFTEESHQ.

Belongs to the glycosyltransferase 2 family.

The protein localises to the cell inner membrane. The catalysed reaction is UDP-4-deoxy-4-formamido-beta-L-arabinose + di-trans,octa-cis-undecaprenyl phosphate = 4-deoxy-4-formamido-alpha-L-arabinopyranosyl di-trans,octa-cis-undecaprenyl phosphate + UDP. The protein operates within glycolipid biosynthesis; 4-amino-4-deoxy-alpha-L-arabinose undecaprenyl phosphate biosynthesis; 4-amino-4-deoxy-alpha-L-arabinose undecaprenyl phosphate from UDP-4-deoxy-4-formamido-beta-L-arabinose and undecaprenyl phosphate: step 1/2. It functions in the pathway bacterial outer membrane biogenesis; lipopolysaccharide biosynthesis. Catalyzes the transfer of 4-deoxy-4-formamido-L-arabinose from UDP to undecaprenyl phosphate. The modified arabinose is attached to lipid A and is required for resistance to polymyxin and cationic antimicrobial peptides. The polypeptide is Undecaprenyl-phosphate 4-deoxy-4-formamido-L-arabinose transferase (Salmonella choleraesuis (strain SC-B67)).